The following is a 785-amino-acid chain: uncharacterized protein (785 aa).

Residues 1–93 (MSWVMVSPEL…GGAYAAAEAA (93 aa)) form the PE domain.

It belongs to the mycobacterial PE family. PGRS subfamily.

This is an uncharacterized protein from Mycobacterium tuberculosis (strain CDC 1551 / Oshkosh).